We begin with the raw amino-acid sequence, 721 residues long: Fatty acid oxidation complex subunit alpha (721 aa).

Residues 1–190 (MIYEGKAITV…KVGAVDAVVA (190 aa)) form an enoyl-CoA hydratase/isomerase region. Substrate is bound at residue Asp297. Positions 312–721 (KDVKQAAVLG…SFFGQASSEE (410 aa)) are 3-hydroxyacyl-CoA dehydrogenase. Residues Met325, Asp344, 401 to 403 (VVE), Lys408, and Ser430 contribute to the NAD(+) site. Catalysis depends on His451, which acts as the For 3-hydroxyacyl-CoA dehydrogenase activity. Asn454 provides a ligand contact to NAD(+). Positions 501 and 660 each coordinate substrate.

The protein in the N-terminal section; belongs to the enoyl-CoA hydratase/isomerase family. It in the C-terminal section; belongs to the 3-hydroxyacyl-CoA dehydrogenase family. Heterotetramer of two alpha chains (FadB) and two beta chains (FadA).

It catalyses the reaction a (3S)-3-hydroxyacyl-CoA + NAD(+) = a 3-oxoacyl-CoA + NADH + H(+). It carries out the reaction a (3S)-3-hydroxyacyl-CoA = a (2E)-enoyl-CoA + H2O. The enzyme catalyses a 4-saturated-(3S)-3-hydroxyacyl-CoA = a (3E)-enoyl-CoA + H2O. The catalysed reaction is (3S)-3-hydroxybutanoyl-CoA = (3R)-3-hydroxybutanoyl-CoA. It catalyses the reaction a (3Z)-enoyl-CoA = a 4-saturated (2E)-enoyl-CoA. It carries out the reaction a (3E)-enoyl-CoA = a 4-saturated (2E)-enoyl-CoA. The protein operates within lipid metabolism; fatty acid beta-oxidation. Functionally, involved in the aerobic and anaerobic degradation of long-chain fatty acids via beta-oxidation cycle. Catalyzes the formation of 3-oxoacyl-CoA from enoyl-CoA via L-3-hydroxyacyl-CoA. It can also use D-3-hydroxyacyl-CoA and cis-3-enoyl-CoA as substrate. The chain is Fatty acid oxidation complex subunit alpha from Pseudomonas syringae pv. syringae (strain B728a).